The chain runs to 623 residues: Phosphomethylpyrimidine synthase (623 aa).

Residues Asn221, Met250, Tyr279, His315, 335 to 337 (SRG), 376 to 379 (DGLR), and Glu415 contribute to the substrate site. Position 419 (His419) interacts with Zn(2+). Residue Tyr442 coordinates substrate. His483 is a Zn(2+) binding site. [4Fe-4S] cluster-binding residues include Cys563, Cys566, and Cys571.

The protein belongs to the ThiC family. Homodimer. The cofactor is [4Fe-4S] cluster.

The enzyme catalyses 5-amino-1-(5-phospho-beta-D-ribosyl)imidazole + S-adenosyl-L-methionine = 4-amino-2-methyl-5-(phosphooxymethyl)pyrimidine + CO + 5'-deoxyadenosine + formate + L-methionine + 3 H(+). The protein operates within cofactor biosynthesis; thiamine diphosphate biosynthesis. Its function is as follows. Catalyzes the synthesis of the hydroxymethylpyrimidine phosphate (HMP-P) moiety of thiamine from aminoimidazole ribotide (AIR) in a radical S-adenosyl-L-methionine (SAM)-dependent reaction. This chain is Phosphomethylpyrimidine synthase, found in Parvibaculum lavamentivorans (strain DS-1 / DSM 13023 / NCIMB 13966).